The following is a 439-amino-acid chain: Probable N-acetylmuramidase (439 aa).

Residues 1–57 form the signal peptide; the sequence is MPVSRIKVKNRHLKKKAKKPLAFYKPATKFAGAVLIAGTLTTTHELLLQQTSPMVQA. Disordered regions lie at residues 218 to 241 and 287 to 320; these read SAGTSNSGGSTATNTNNNSNTSST and SSSSSNTNSSTSSGNSAGTTTPTTSVTPAKPASQ. In terms of domain architecture, LysM 1 spans 241–284; the sequence is TTYTVKSGDTLWGISQKYGISVAQIQSANNLKSTVIYIGQKLVL. Residues 287–319 are compositionally biased toward low complexity; that stretch reads SSSSSNTNSSTSSGNSAGTTTPTTSVTPAKPAS. The LysM 2 domain occupies 321–364; the sequence is TTIKVKSGDTLWGLSVKYKTTIAQLKSWNHLNSDTIFIGQNLIV. A disordered region spans residues 372–393; the sequence is SSSTGSSSASTSSTSNSSAASN. The LysM 3 domain maps to 395 to 438; it reads SIHKVVKGDTLWGLSQKSGSPIASIKAWNHLSSDTILIGQYLRI.

This sequence belongs to the glycosyl hydrolase 73 family.

Its subcellular location is the secreted. It catalyses the reaction Hydrolysis of (1-&gt;4)-beta-linkages between N-acetylmuramic acid and N-acetyl-D-glucosamine residues in a peptidoglycan and between N-acetyl-D-glucosamine residues in chitodextrins.. Its function is as follows. Required for cell separation during growth. The polypeptide is Probable N-acetylmuramidase (acmA) (Lactococcus lactis subsp. lactis (strain IL1403) (Streptococcus lactis)).